The chain runs to 280 residues: Energy-coupling factor transporter ATP-binding protein EcfA2 (280 aa).

Residues 3-245 (IEFKNVSYTY…VELLESKQLG (243 aa)) enclose the ABC transporter domain. 40–47 (GHTGSGKS) is a binding site for ATP.

This sequence belongs to the ABC transporter superfamily. Energy-coupling factor EcfA family. As to quaternary structure, forms a stable energy-coupling factor (ECF) transporter complex composed of 2 membrane-embedded substrate-binding proteins (S component), 2 ATP-binding proteins (A component) and 2 transmembrane proteins (T component).

It is found in the cell membrane. Functionally, ATP-binding (A) component of a common energy-coupling factor (ECF) ABC-transporter complex. Unlike classic ABC transporters this ECF transporter provides the energy necessary to transport a number of different substrates. The sequence is that of Energy-coupling factor transporter ATP-binding protein EcfA2 from Streptococcus agalactiae serotype Ia (strain ATCC 27591 / A909 / CDC SS700).